A 285-amino-acid chain; its full sequence is Methylamine utilization protein MauF (285 aa).

Helical transmembrane passes span 39–59 (LGGL…LSQT), 63–83 (GVAV…LSTW), 120–140 (AVGA…LGFG), 144–164 (FGAL…QLGF), 184–204 (FPVW…YLTY), 209–229 (ILYL…AILL), and 265–285 (ALLD…FAAL).

It localises to the cell membrane. The protein operates within one-carbon metabolism; methylamine degradation. This chain is Methylamine utilization protein MauF (mauF), found in Methylorubrum extorquens (strain ATCC 14718 / DSM 1338 / JCM 2805 / NCIMB 9133 / AM1) (Methylobacterium extorquens).